The primary structure comprises 354 residues: MSKAIIKLDHIDITFHQKKRTIEAVKGVTVHINQGDIYGIVGYSGAGKSTLVRVINLLQTPTKGKITVDQDVIFENGEKRLSSQELRKKRHEIGMIFQHFNLMAQKTARQNVAFALRHSNLSAAQKESKVTELLELVGLTDRAENYPSQLSGGQKQRVAIARALANDPKILISDEATSALDPKTTKQILALLQDLNKKLGLTVVMITHEMQIVKDICNRVAVMQEGSLIEEGSVLDIFSNPREDLTKDFIKTATGIEEALIKIKQQEIVKNLPANAALVQLKYAGKTTDEPILNNLYKKYQVTANILYGNIEILEKTPVGEMIVILEGAATNIDQALNDLTHSDLTVTVLKRGV.

One can recognise an ABC transporter domain in the interval 8 to 250 (LDHIDITFHQ…PREDLTKDFI (243 aa)). 42-49 (GYSGAGKS) provides a ligand contact to ATP.

The protein belongs to the ABC transporter superfamily. Methionine importer (TC 3.A.1.24) family. In terms of assembly, the complex is composed of two ATP-binding proteins (MetN), two transmembrane proteins (MetI) and a solute-binding protein (MetQ).

The protein resides in the cell membrane. It carries out the reaction L-methionine(out) + ATP + H2O = L-methionine(in) + ADP + phosphate + H(+). The catalysed reaction is D-methionine(out) + ATP + H2O = D-methionine(in) + ADP + phosphate + H(+). Functionally, part of the ABC transporter complex MetNIQ involved in methionine import. Responsible for energy coupling to the transport system. This is Methionine import ATP-binding protein MetN from Streptococcus mutans serotype c (strain ATCC 700610 / UA159).